The sequence spans 132 residues: Replication enhancer protein (132 aa).

This sequence belongs to the geminiviridae replication enhancer protein family. As to quaternary structure, homooligomer. Interacts with the replication-associated protein (REP). Interacts with host proliferating cell nuclear antigen (PCNA). Interacts with host retinoblastoma-related protein 1 (RBR1), and may thereby deregulate the host cell cycle. Oligomerization and interaction with PCNA are necessary for optimal replication enhancement.

Increases viral DNA accumulation. Enhances infectivity and symptom expression. In Tomato mottle virus (isolate Florida) (ToMoV), this protein is Replication enhancer protein.